The sequence spans 450 residues: Enolase (450 aa).

Gln173 contacts (2R)-2-phosphoglycerate. Glu215 acts as the Proton donor in catalysis. Mg(2+) contacts are provided by Asp254, Glu308, and Asp335. (2R)-2-phosphoglycerate-binding residues include Lys360, Arg389, Ser390, and Lys411. The Proton acceptor role is filled by Lys360.

It belongs to the enolase family. Mg(2+) is required as a cofactor.

The protein resides in the cytoplasm. Its subcellular location is the secreted. It is found in the cell surface. It catalyses the reaction (2R)-2-phosphoglycerate = phosphoenolpyruvate + H2O. It functions in the pathway carbohydrate degradation; glycolysis; pyruvate from D-glyceraldehyde 3-phosphate: step 4/5. Its function is as follows. Catalyzes the reversible conversion of 2-phosphoglycerate (2-PG) into phosphoenolpyruvate (PEP). It is essential for the degradation of carbohydrates via glycolysis. The sequence is that of Enolase from Malacoplasma penetrans (strain HF-2) (Mycoplasma penetrans).